The chain runs to 212 residues: Kynurenine formamidase (212 aa).

Substrate is bound at residue W18. H48, H52, and D54 together coordinate Zn(2+). The active-site Proton donor/acceptor is H58. Residues H160 and E172 each coordinate Zn(2+).

The protein belongs to the Cyclase 1 superfamily. KynB family. In terms of assembly, homodimer. Requires Zn(2+) as cofactor.

The catalysed reaction is N-formyl-L-kynurenine + H2O = L-kynurenine + formate + H(+). The protein operates within amino-acid degradation; L-tryptophan degradation via kynurenine pathway; L-kynurenine from L-tryptophan: step 2/2. Its function is as follows. Catalyzes the hydrolysis of N-formyl-L-kynurenine to L-kynurenine, the second step in the kynurenine pathway of tryptophan degradation. The sequence is that of Kynurenine formamidase from Paraburkholderia phytofirmans (strain DSM 17436 / LMG 22146 / PsJN) (Burkholderia phytofirmans).